We begin with the raw amino-acid sequence, 513 residues long: Alpha-1B-glycoprotein (513 aa).

The first 20 residues, 1–20, serve as a signal peptide directing secretion; that stretch reads MSLLTTVLLLWGFTLGPGNA. Ig-like V-type domains follow at residues 22–126, 127–219, 220–312, 313–415, and 416–513; these read WLDS…VTGK, EPLP…MSAT, QLPP…PVEL, MWSD…LRIN, and GPAP…VEGS. 3 N-linked (GlcNAc...) asparagine glycosylation sites follow: asparagine 44, asparagine 89, and asparagine 192. Cystine bridges form between cysteine 49–cysteine 96, cysteine 153–cysteine 195, cysteine 245–cysteine 292, cysteine 343–cysteine 392, and cysteine 441–cysteine 488. Residues asparagine 369, asparagine 381, asparagine 389, and asparagine 485 are each glycosylated (N-linked (GlcNAc...) asparagine).

Interacts with CRISP3. As to expression, isoform 1 is expressed in normal liver. Isoform 2 is expressed in the regenerating liver after partial hepatectomy and at very low levels in the normal lung, brain and testis.

It is found in the secreted. This chain is Alpha-1B-glycoprotein, found in Rattus norvegicus (Rat).